Reading from the N-terminus, the 688-residue chain is MIDRYKHQQLRIGLVSPQQISAWATKKIPNGEIVGEVTKPYTFHYKTNKPEKDGLFCERIFGPIKSGICACGNYRVIGDEKGDPKFCEQCGVEFVDSRIRRYQMGYIKLTCPVTHVWYLKRLPSYIANLLDKPLKELEGLVYCDVCFDRNPNFSFARPITKKPTFLRLRGSFEYEIQSWKYSIPLFFTTQGFEIFRNREISTGAGAIREQLADLDLRIIIENSLVEWKQLGEEGPTGNEWEDRKIVRRKDFLVRRMELAKHFIRTNIEPEWMVLCLLPVLPPELRPIIQIEGGKLMSSDINELYRRVIYRNNTLTDLLTTSRSTPGELVMCQEKLVQEAVDTLLDNGIRGQPMRDGHNKVYKSFSDVIEGKEGRFRETLLGKRVDYSGRSVIVVGPSLSLHRCGLPREIAIELFQTFVIRGLIRQHLASNIGVAKSQIREKKPIVWEILQEVMQGHPVLLNRAPTLHRLGIQSFQPILVEGRTICLHPLVCKGFNADFDGDQMAVHVPLSLEAQAEARLLMFSHMNLLSPAIGDPISVPTQDMLIGLYVLTSGTRRGICANRYNPCNRKNYQNERIYETNYKYMKEPFFCNSYDAIGAYRQKRINLDSPLWLRWQLDQRVIASKEVPIEVHYESFGNYHEIYAHYLIVRSVKKETLYIYIRTTVGHISLYREIEEAIQGFSQACSYDT.

Zn(2+)-binding residues include Cys69, Cys71, Cys87, and Cys90. Positions 497, 499, and 501 each coordinate Mg(2+).

This sequence belongs to the RNA polymerase beta' chain family. RpoC1 subfamily. In terms of assembly, in plastids the minimal PEP RNA polymerase catalytic core is composed of four subunits: alpha, beta, beta', and beta''. When a (nuclear-encoded) sigma factor is associated with the core the holoenzyme is formed, which can initiate transcription. The cofactor is Mg(2+). Zn(2+) serves as cofactor.

It is found in the plastid. The protein resides in the chloroplast. It catalyses the reaction RNA(n) + a ribonucleoside 5'-triphosphate = RNA(n+1) + diphosphate. Functionally, DNA-dependent RNA polymerase catalyzes the transcription of DNA into RNA using the four ribonucleoside triphosphates as substrates. The chain is DNA-directed RNA polymerase subunit beta' from Sinapis alba (White mustard).